The sequence spans 348 residues: Anthranilate phosphoribosyltransferase (348 aa).

5-phospho-alpha-D-ribose 1-diphosphate is bound by residues glycine 81, 84–85, 91–94, 109–117, and serine 121; these read GD, NVST, and KHGNRAVSG. Glycine 81 serves as a coordination point for anthranilate. Mg(2+) is bound at residue serine 93. Asparagine 112 provides a ligand contact to anthranilate. Arginine 167 contacts anthranilate. Aspartate 226 and glutamate 227 together coordinate Mg(2+).

Belongs to the anthranilate phosphoribosyltransferase family. In terms of assembly, homodimer. The cofactor is Mg(2+).

It catalyses the reaction N-(5-phospho-beta-D-ribosyl)anthranilate + diphosphate = 5-phospho-alpha-D-ribose 1-diphosphate + anthranilate. The protein operates within amino-acid biosynthesis; L-tryptophan biosynthesis; L-tryptophan from chorismate: step 2/5. Catalyzes the transfer of the phosphoribosyl group of 5-phosphorylribose-1-pyrophosphate (PRPP) to anthranilate to yield N-(5'-phosphoribosyl)-anthranilate (PRA). The polypeptide is Anthranilate phosphoribosyltransferase (Stutzerimonas stutzeri (strain A1501) (Pseudomonas stutzeri)).